The sequence spans 179 residues: Ribosome-recycling factor (179 aa).

Belongs to the RRF family.

It localises to the cytoplasm. Functionally, responsible for the release of ribosomes from messenger RNA at the termination of protein biosynthesis. May increase the efficiency of translation by recycling ribosomes from one round of translation to another. In Chlamydia trachomatis serovar L2b (strain UCH-1/proctitis), this protein is Ribosome-recycling factor.